A 115-amino-acid chain; its full sequence is NADH-ubiquinone oxidoreductase chain 3 (115 aa).

Helical transmembrane passes span 3 to 23, 55 to 75, and 84 to 104; these read LLLTLLTNTTLALLLVFIAFW, FFLVAITFLLFDLEIALLLPL, and LNTMLTMALFLISLLAASLAY.

It belongs to the complex I subunit 3 family. In terms of assembly, core subunit of respiratory chain NADH dehydrogenase (Complex I) which is composed of 45 different subunits. Interacts with TMEM186. Interacts with TMEM242.

It localises to the mitochondrion inner membrane. The catalysed reaction is a ubiquinone + NADH + 5 H(+)(in) = a ubiquinol + NAD(+) + 4 H(+)(out). Core subunit of the mitochondrial membrane respiratory chain NADH dehydrogenase (Complex I) which catalyzes electron transfer from NADH through the respiratory chain, using ubiquinone as an electron acceptor. Essential for the catalytic activity of complex I. This Balaenoptera musculus (Blue whale) protein is NADH-ubiquinone oxidoreductase chain 3.